Consider the following 459-residue polypeptide: Plasma alpha-L-fucosidase (459 aa).

An N-terminal signal peptide occupies residues 1–23 (MRLGLLMFLPLLLLATRYRAVTA). N-linked (GlcNAc...) asparagine glycosylation is found at N163 and N231. S293 bears the Phosphoserine mark. N369 carries N-linked (GlcNAc...) asparagine glycosylation.

This sequence belongs to the glycosyl hydrolase 29 family. As to quaternary structure, homotetramer.

The protein resides in the secreted. It catalyses the reaction an alpha-L-fucoside + H2O = L-fucose + an alcohol. Its function is as follows. Alpha-L-fucosidase is responsible for hydrolyzing the alpha-1,6-linked fucose joined to the reducing-end N-acetylglucosamine of the carbohydrate moieties of glycoproteins. The polypeptide is Plasma alpha-L-fucosidase (Fuca2) (Rattus norvegicus (Rat)).